Consider the following 750-residue polypeptide: Photosystem I P700 chlorophyll a apoprotein A1 (750 aa).

The next 8 helical transmembrane spans lie at 70–93 (VFSA…FHGA), 156–179 (LYCT…FHYH), 195–219 (LNHH…HVSL), 291–309 (TAHH…GHMY), 346–369 (WHAQ…HHMY), 385–411 (LSLF…IFMV), 433–455 (AIIS…LYIH), and 531–549 (FLVH…LILL). [4Fe-4S] cluster contacts are provided by cysteine 573 and cysteine 582. The next 2 helical transmembrane spans lie at 589 to 610 (HVFL…HFSW) and 664 to 686 (LSAY…MFLF). A chlorophyll a'-binding site is contributed by histidine 675. Residues methionine 683 and tyrosine 691 each contribute to the chlorophyll a site. Tryptophan 692 is a phylloquinone binding site. A helical membrane pass occupies residues 724 to 744 (AVGVAHYLLGGIATTWAFFLA).

This sequence belongs to the PsaA/PsaB family. As to quaternary structure, the PsaA/B heterodimer binds the P700 chlorophyll special pair and subsequent electron acceptors. PSI consists of a core antenna complex that captures photons, and an electron transfer chain that converts photonic excitation into a charge separation. The eukaryotic PSI reaction center is composed of at least 11 subunits. P700 is a chlorophyll a/chlorophyll a' dimer, A0 is one or more chlorophyll a, A1 is one or both phylloquinones and FX is a shared 4Fe-4S iron-sulfur center. is required as a cofactor.

It localises to the plastid. It is found in the chloroplast thylakoid membrane. The catalysed reaction is reduced [plastocyanin] + hnu + oxidized [2Fe-2S]-[ferredoxin] = oxidized [plastocyanin] + reduced [2Fe-2S]-[ferredoxin]. In terms of biological role, psaA and PsaB bind P700, the primary electron donor of photosystem I (PSI), as well as the electron acceptors A0, A1 and FX. PSI is a plastocyanin-ferredoxin oxidoreductase, converting photonic excitation into a charge separation, which transfers an electron from the donor P700 chlorophyll pair to the spectroscopically characterized acceptors A0, A1, FX, FA and FB in turn. Oxidized P700 is reduced on the lumenal side of the thylakoid membrane by plastocyanin. The protein is Photosystem I P700 chlorophyll a apoprotein A1 of Angiopteris evecta (Mule's foot fern).